A 528-amino-acid polypeptide reads, in one-letter code: Importin subunit alpha-2 (528 aa).

Low complexity predominate over residues 1 to 15 (MADDSASPSPSSASP). The disordered stretch occupies residues 1-36 (MADDSASPSPSSASPLQHHREALKSSVRNTAASRRR). 8 ARM repeats span residues 125 to 165 (VPLV…NIAA), 167 to 206 (EPEE…NVAG), 209 to 248 (AELR…NLIK), 253 to 292 (KAAN…YLSA), 294 to 335 (SDRG…NLIA), 338 to 383 (DYMV…NIAA), 386 to 425 (FEHK…NLCV), and 438 to 477 (VEHL…LVMR).

This sequence belongs to the importin alpha family. Forms a complex with importin subunit beta-1. The whole complex, most stable and composed of importin alpha, importin beta and NLS substrate, is referred to as PTAC or pore targeting complex. In terms of tissue distribution, expressed in root, callus, and etiolated leaf. Low expression in green leaf.

The protein resides in the cytoplasm. The protein localises to the perinuclear region. In terms of biological role, binds specifically and directly to substrates containing either a simple or bipartite NLS motif. Promotes docking of import substrates to the nuclear envelope. In Oryza sativa subsp. japonica (Rice), this protein is Importin subunit alpha-2.